A 673-amino-acid polypeptide reads, in one-letter code: RAS guanyl-releasing protein 4 (673 aa).

Composition is skewed to basic residues over residues 1–10 and 20–32; these read MNRKDSKRKS and GRGRPRQARRHKT. Disordered stretches follow at residues 1-34 and 162-188; these read MNRKDSKRKSHQECPVKTGGRGRPRQARRHKTCP and QSLGDFSSRLSPGGPGPPHPMSSPGLG. One can recognise an N-terminal Ras-GEF domain in the interval 49 to 172; sequence GMLNEGGCSE…SLGDFSSRLS (124 aa). The region spanning 201–432 is the Ras-GEF domain; sequence ETGELAEHLT…YELSYAREPR (232 aa). The EF-hand domain maps to 466–501; that stretch reads HVEQLVESVFKNYDPDGRGTISQEDFERLSGNFPFA. A Phorbol-ester/DAG-type zinc finger spans residues 540–590; the sequence is LHTFQEVTFRKPTFCNSCSGFLWGVTKQGYRCRDCGLCCHRHCRDQVKVEC. 2 disordered regions span residues 593 to 618 and 638 to 673; these read RPGAKGDASPPEAPVPPTPVPQASCG and RHAWTQTESPHPSWEPETVPLPAKASPPTESSKLNS. A compositionally biased stretch (pro residues) spans 603 to 612; that stretch reads PEAPVPPTPV.

Belongs to the RASGRP family.

Its subcellular location is the cytoplasm. The protein localises to the cell membrane. In terms of biological role, functions as a cation- and diacylglycerol (DAG)-regulated nucleotide exchange factor activating Ras through the exchange of bound GDP for GTP. In neutrophils, participates in a phospholipase C-activating N-formyl peptide-activated GPCR (G protein-coupled receptor) signaling pathway by promoting Ras-mediated activation of PIK3CG/PI3Kgamma to promote neutrophil functional responses. In CD117(+) dendritic cells and mast cells, participates in an lipopolysaccharide (LPS)-activated signaling pathway that stimulates the production of interferon-gamma and other pro-inflammatory cytokines by natural killer (NK) cells. May function in mast cell differentiation. Does not appear to be required for the development of B-cells, DC-cells, T-cells, or NK-cells. The sequence is that of RAS guanyl-releasing protein 4 (RASGRP4) from Bos taurus (Bovine).